The chain runs to 85 residues: Small ribosomal subunit protein bS18A (85 aa).

This sequence belongs to the bacterial ribosomal protein bS18 family. In terms of assembly, part of the 30S ribosomal subunit. Forms a tight heterodimer with protein bS6.

In terms of biological role, binds as a heterodimer with protein bS6 to the central domain of the 16S rRNA, where it helps stabilize the platform of the 30S subunit. This chain is Small ribosomal subunit protein bS18A, found in Mycolicibacterium smegmatis (strain ATCC 700084 / mc(2)155) (Mycobacterium smegmatis).